The primary structure comprises 155 residues: MSYGLDSGDVLEAEDPFIILLVEDNNAHAMLIMRAFERLGFTGRIEWLRDGKAALDYLRLHEGGGRSLPRMVLLDLRLPKVDGHEVLSQIKRSERLRAIPVVVLTTSTSDDDLRRAYSNHVNSYLIKPLSFEDLKRTVEEIKEYWLGWNRSPGPA.

In terms of domain architecture, Response regulatory spans 18 to 142; sequence IILLVEDNNA…DLKRTVEEIK (125 aa). Residue D75 is modified to 4-aspartylphosphate.

Post-translationally, phosphorylated by FilI.

In terms of biological role, member of the two-component regulatory system FilI/FilRs, which is involved in the regulation of methanogenesis. This chain is Probable methanogenesis regulatory protein FilR2, found in Methanothrix harundinacea (strain 6Ac) (Methanosaeta harundinacea).